A 101-amino-acid polypeptide reads, in one-letter code: MPRKKLVGTVVSNKMDKTVVVRVERTFAHPLYKKTVKRAKKYHAHDEDNSCGIGDIVEIEECRPLSKTKKFKVVRIVKKSVFGEEKLETPENVEMLGGEEK.

This sequence belongs to the universal ribosomal protein uS17 family. Part of the 30S ribosomal subunit.

Functionally, one of the primary rRNA binding proteins, it binds specifically to the 5'-end of 16S ribosomal RNA. The chain is Small ribosomal subunit protein uS17 from Kosmotoga olearia (strain ATCC BAA-1733 / DSM 21960 / TBF 19.5.1).